The chain runs to 806 residues: MSGWPRIYYKLLNLPLSILVKSKSIPAEPAQELGLDTSRPIMYVLPYNSKADLLTLRAQCLAHDLPDPLEPLEIDGALLPRYVFIHGGPRVFTYYTPKEESVKLFHDYLDLHRGNPALDVQMVPVSVMFGRAPGREKGEVNPPLRMLNGVQKFFAISWLGRDSFVRFSPSVSLRRMADEHGTDKIIAQKLARVARMHFARQRLAAVGPRLPARQDLFNKLLASKAIARAVEDEARSKKISHEKAQQNAIALMEEIAANFSYEMIRLTDRILGFTWNRLYQGINVHNAERVRQLAHDGHEIVYVPCHRSHMDYLLLSYVLYHQGLVPPHIAAGINLNFWPAGPIFRRLGAFFIRRTFKGNKLYSTVFREYLGELFSRGYSVEYFVEGGRSRTGRLLDPKTGTLSMTIQAMLRGGTRPITLVPIYIGYEHVMEVGTYAKELRGATKEKESLPQMLRGLSKLRNLGQGYVNFGEPMPLMTYLNQHVPEWRESIDPIEAIRPAWLTPTVNSIAADLMVRINNAGAANAMNLCCTALLASRQRSLTREQLTEQLDCYLDLMRNVPYSTDSTVPAASAGELIDHALQMNKFEAEKDTIGDIIILPREQAVLMTYYRNNIAHMLIMPSLMAAIITQHRRISRDALQQHVEALYPMLKAELFLRWEREELASVIDALASEMQRQGLITLQDNELHINPAHSRTLQLLAAGARETLQRYAITFWLLSANPSINRSTLEKESRTVAQRLSVLHGINAPEFFDKAVFSSLVLTLRDEGYISDTGDAEPAETMKIYQMLADLITSDVRLTIESATQGE.

The HXXXXD motif motif lies at 305–310 (CHRSHM).

This sequence belongs to the GPAT/DAPAT family.

It localises to the cell inner membrane. The enzyme catalyses sn-glycerol 3-phosphate + an acyl-CoA = a 1-acyl-sn-glycero-3-phosphate + CoA. It participates in phospholipid metabolism; CDP-diacylglycerol biosynthesis; CDP-diacylglycerol from sn-glycerol 3-phosphate: step 1/3. The chain is Glycerol-3-phosphate acyltransferase from Salmonella arizonae (strain ATCC BAA-731 / CDC346-86 / RSK2980).